A 671-amino-acid chain; its full sequence is UvrABC system protein C (671 aa).

The region spanning 16 to 95 (VEPGVYRFRD…IKEFDPRFNV (80 aa)) is the GIY-YIG domain. A UVR domain is found at 208–243 (DRLARDMEREMNQAAQELNFERAARLRDNISALQRA). The tract at residues 645 to 671 (SSAPSSGATEAVLPAMVENGVDDTPST) is disordered.

It belongs to the UvrC family. In terms of assembly, interacts with UvrB in an incision complex.

It is found in the cytoplasm. Functionally, the UvrABC repair system catalyzes the recognition and processing of DNA lesions. UvrC both incises the 5' and 3' sides of the lesion. The N-terminal half is responsible for the 3' incision and the C-terminal half is responsible for the 5' incision. This Mycobacteroides abscessus (strain ATCC 19977 / DSM 44196 / CCUG 20993 / CIP 104536 / JCM 13569 / NCTC 13031 / TMC 1543 / L948) (Mycobacterium abscessus) protein is UvrABC system protein C.